A 375-amino-acid polypeptide reads, in one-letter code: Trichodiene synthase (375 aa).

This sequence belongs to the trichodiene synthase family.

It carries out the reaction (2E,6E)-farnesyl diphosphate = trichodiene + diphosphate. Its pathway is sesquiterpene biosynthesis; trichothecene biosynthesis. Its function is as follows. TS is a member of the terpene cyclase group of enzymes. It catalyzes the isomerization and cyclization of farnesyl pyro-phosphate to form trichodiene, the first cyclic intermediate in the biosynthetic pathway for trichothecenes. It serves to branch trichothecene biosynthesis from the isoprenoid pathway. The sequence is that of Trichodiene synthase (TRI5) from Fusarium cortaderiae.